The following is a 246-amino-acid chain: Zinc import ATP-binding protein ZnuC (246 aa).

The region spanning 24-243 (LKIENLALAY…RTLNEIFSSY (220 aa)) is the ABC transporter domain. 56–63 (GPNGGGKT) serves as a coordination point for ATP.

Belongs to the ABC transporter superfamily. Zinc importer (TC 3.A.1.15.5) family. The complex is composed of two ATP-binding proteins (ZnuC), two transmembrane proteins (ZnuB) and a solute-binding protein (ZnuA).

It localises to the cell membrane. The enzyme catalyses Zn(2+)(out) + ATP(in) + H2O(in) = Zn(2+)(in) + ADP(in) + phosphate(in) + H(+)(in). In terms of biological role, part of the ABC transporter complex ZnuABC involved in zinc import. Responsible for energy coupling to the transport system. The sequence is that of Zinc import ATP-binding protein ZnuC from Wolbachia pipientis wMel.